Here is a 485-residue protein sequence, read N- to C-terminus: Probable glycine dehydrogenase (decarboxylating) subunit 2 (485 aa).

Lys273 carries the N6-(pyridoxal phosphate)lysine modification.

It belongs to the GcvP family. C-terminal subunit subfamily. In terms of assembly, the glycine cleavage system is composed of four proteins: P, T, L and H. In this organism, the P 'protein' is a heterodimer of two subunits. Pyridoxal 5'-phosphate serves as cofactor.

It carries out the reaction N(6)-[(R)-lipoyl]-L-lysyl-[glycine-cleavage complex H protein] + glycine + H(+) = N(6)-[(R)-S(8)-aminomethyldihydrolipoyl]-L-lysyl-[glycine-cleavage complex H protein] + CO2. Its function is as follows. The glycine cleavage system catalyzes the degradation of glycine. The P protein binds the alpha-amino group of glycine through its pyridoxal phosphate cofactor; CO(2) is released and the remaining methylamine moiety is then transferred to the lipoamide cofactor of the H protein. The chain is Probable glycine dehydrogenase (decarboxylating) subunit 2 from Oceanobacillus iheyensis (strain DSM 14371 / CIP 107618 / JCM 11309 / KCTC 3954 / HTE831).